Consider the following 314-residue polypeptide: Glutathione synthetase (314 aa).

Residues 125–311 (EKLAAQLFPQ…IAGQLFDAIE (187 aa)) form the ATP-grasp domain. 151 to 208 (FVQKQEQAILKPLDGMGGHSIFRSSNGDPNLNVILETLTDGGRTLAIAQRYLQQIIEG) provides a ligand contact to ATP. Residues Glu-282 and Asn-284 each coordinate Mg(2+).

It belongs to the prokaryotic GSH synthase family. The cofactor is Mg(2+). Mn(2+) serves as cofactor.

It carries out the reaction gamma-L-glutamyl-L-cysteine + glycine + ATP = glutathione + ADP + phosphate + H(+). It functions in the pathway sulfur metabolism; glutathione biosynthesis; glutathione from L-cysteine and L-glutamate: step 2/2. This chain is Glutathione synthetase, found in Xylella fastidiosa (strain 9a5c).